The following is a 252-amino-acid chain: Aliphatic sulfonates import ATP-binding protein SsuB 1 (252 aa).

Positions 6–234 constitute an ABC transporter domain; it reads LQLHIAGKRF…PRDRQAHEAA (229 aa). 38 to 45 contributes to the ATP binding site; it reads GASGCGKS.

Belongs to the ABC transporter superfamily. Aliphatic sulfonates importer (TC 3.A.1.17.2) family. As to quaternary structure, the complex is composed of two ATP-binding proteins (SsuB), two transmembrane proteins (SsuC) and a solute-binding protein (SsuA).

It localises to the cell inner membrane. It carries out the reaction ATP + H2O + aliphatic sulfonate-[sulfonate-binding protein]Side 1 = ADP + phosphate + aliphatic sulfonateSide 2 + [sulfonate-binding protein]Side 1.. Functionally, part of the ABC transporter complex SsuABC involved in aliphatic sulfonates import. Responsible for energy coupling to the transport system. This Xanthomonas axonopodis pv. citri (strain 306) protein is Aliphatic sulfonates import ATP-binding protein SsuB 1.